The following is a 66-amino-acid chain: Large ribosomal subunit protein bL32 (66 aa).

The segment covering methionine 1–glutamine 19 has biased composition (basic residues). Residues methionine 1–tryptophan 20 form a disordered region.

The protein belongs to the bacterial ribosomal protein bL32 family.

This chain is Large ribosomal subunit protein bL32, found in Beutenbergia cavernae (strain ATCC BAA-8 / DSM 12333 / CCUG 43141 / JCM 11478 / NBRC 16432 / NCIMB 13614 / HKI 0122).